A 474-amino-acid chain; its full sequence is tRNA modification GTPase MnmE (474 aa).

The (6S)-5-formyl-5,6,7,8-tetrahydrofolate site is built by arginine 25, glutamate 82, and lysine 123. Residues 219 to 386 form the TrmE-type G domain; that stretch reads GIKVVIAGKP…LKKHLYDSAM (168 aa). Asparagine 229 contacts K(+). Residues 229–234, 248–254, and 273–276 each bind GTP; these read NAGKSS, SNISGTT, and DTAG. Mg(2+) is bound at residue serine 233. Serine 248, isoleucine 250, and threonine 253 together coordinate K(+). Threonine 254 is a Mg(2+) binding site. Residue lysine 474 coordinates (6S)-5-formyl-5,6,7,8-tetrahydrofolate.

Belongs to the TRAFAC class TrmE-Era-EngA-EngB-Septin-like GTPase superfamily. TrmE GTPase family. As to quaternary structure, homodimer. Heterotetramer of two MnmE and two MnmG subunits. K(+) serves as cofactor.

It localises to the cytoplasm. Functionally, exhibits a very high intrinsic GTPase hydrolysis rate. Involved in the addition of a carboxymethylaminomethyl (cmnm) group at the wobble position (U34) of certain tRNAs, forming tRNA-cmnm(5)s(2)U34. The protein is tRNA modification GTPase MnmE of Blochmanniella floridana.